A 275-amino-acid polypeptide reads, in one-letter code: Large ribosomal subunit protein uL2 (275 aa).

Residues 222-257 (GTAMNAVDHPHGGGRGRSKGNNQPRSPWNQPAKGFK) are disordered. A compositionally biased stretch (polar residues) spans 240-250 (KGNNQPRSPWN).

Belongs to the universal ribosomal protein uL2 family. As to quaternary structure, part of the 50S ribosomal subunit. Forms a bridge to the 30S subunit in the 70S ribosome.

Functionally, one of the primary rRNA binding proteins. Required for association of the 30S and 50S subunits to form the 70S ribosome, for tRNA binding and peptide bond formation. It has been suggested to have peptidyltransferase activity; this is somewhat controversial. Makes several contacts with the 16S rRNA in the 70S ribosome. In Endomicrobium trichonymphae, this protein is Large ribosomal subunit protein uL2.